Here is a 289-residue protein sequence, read N- to C-terminus: Early E1A protein (289 aa).

An interaction with RB1 in competition with E2F1 region spans residues 41–49 (PTLHELYDL). Residues 76-140 (EGIDLLTFPP…PSDDEDEEGE (65 aa)) form an interaction with UBE2I region. Residues 82–107 (TFPPAPGSPEPPHLSRQPEQPEQRAL) form a disordered region. Over residues 84-93 (PPAPGSPEPP) the composition is skewed to pro residues. The residue at position 89 (Ser-89) is a Phosphoserine; by host. The PXLXP motif, interaction with host ZMYND11 motif lies at 113–117 (PNLVP). An LXCXE motif, interaction with host RB1 and TMEM173/STING motif is present at residues 122–126 (LTCHE). Residues 154–174 (CRSCHYHRRNTGDPDIMCSLC) fold into a zinc finger. The segment at 186-240 (PVSEPEPEPEPEPEPARPTRRPKMAPAILRRPTSPVSRECNSSTDSCDSGPSNTP) is disordered. Ser-219 and Ser-231 each carry phosphoserine; by host. The span at 219-237 (SPVSRECNSSTDSCDSGPS) shows a compositional bias: polar residues. The Bipartite nuclear localization signal signature appears at 258–289 (RVGGRRQAVECIEDLLNEPGQPLDLSCKRPRP). A PXDLS motif, CTBP-binding motif is present at residues 279-283 (PLDLS).

It belongs to the adenoviridae E1A protein family. In terms of assembly, interacts with host UBE2I; this interaction interferes with polySUMOylation. Interacts with host RB1; this interaction induces the aberrant dissociation of RB1-E2F1 complex thereby disrupting the activity of RB1 and activating E2F1-regulated genes. Interacts with host ATF7; the interaction enhances ATF7-mediated viral transactivation activity which requires the zinc binding domains of both proteins. Isoform early E1A 32 kDa protein and isoform early E1A 26 kDa protein interact (via N-terminus) with CUL1 and E3 ubiquitin ligase RBX1; these interactions inhibit RBX1-CUL1-dependent elongation reaction of ubiquitin chains and attenuate ubiquitination of SCF(FBXW7) target proteins. Interacts (via PXLXP motif) with host ZMYND11/BS69 (via MYND-type zinc finger); this interaction inhibits E1A mediated transactivation. Interacts with host EP300; this interaction stimulates the acetylation of RB1 by recruiting EP300 and RB1 into a multimeric-protein complex. Interacts with host CTBP1 and CTBP2; this interaction seems to potentiate viral replication. Interacts with host DCAF7 (ref.16). Interacts with host DYRK1A. Interacts with host KPNA4; this interaction allows E1A import into the host nucleus. Interacts with host EP400; this interaction stabilizes MYC. Interacts with host TBP protein; this interaction probably disrupts the TBP-TATA complex. Interacts (via LXCXE motif) with host TMEM173/STING; this interaction impairs the ability of TMEM173/STING to sense cytosolic DNA and promote the production of type I interferon (IFN-alpha and IFN-beta). Interacts (via C-terminus) with host ZBED1/hDREF (via C-terminus); the interaction is direct.

The protein localises to the host nucleus. Functionally, plays a role in viral genome replication by driving entry of quiescent cells into the cell cycle. Stimulation of progression from G1 to S phase allows the virus to efficiently use the cellular DNA replicating machinery to achieve viral genome replication. E1A protein has both transforming and trans-activating activities. Induces the disassembly of the E2F1 transcription factor from RB1 by direct competition for the same binding site on RB1, with subsequent transcriptional activation of E2F1-regulated S-phase genes and of the E2 region of the adenoviral genome. Release of E2F1 leads to the ARF-mediated inhibition of MDM2 and causes TP53/p53 to accumulate because it is not targeted for degradation by MDM2-mediated ubiquitination anymore. This increase in TP53, in turn, would arrest the cell proliferation and direct its death but this effect is counteracted by the viral protein E1B-55K. Inactivation of the ability of RB1 to arrest the cell cycle is critical for cellular transformation, uncontrolled cellular growth and proliferation induced by viral infection. Interaction with RBX1 and CUL1 inhibits ubiquitination of the proteins targeted by SCF(FBXW7) ubiquitin ligase complex, and may be linked to unregulated host cell proliferation. The tumorigenesis-restraining activity of E1A may be related to the disruption of the host CtBP-CtIP complex through the CtBP binding motif. Interaction with host TMEM173/STING impairs the ability of TMEM173/STING to sense cytosolic DNA and promote the production of type I interferon (IFN-alpha and IFN-beta). Promotes the sumoylation of host ZBED1/hDREF with SUMO1. The protein is Early E1A protein of Homo sapiens (Human).